The sequence spans 442 residues: 26S proteasome non-ATPase regulatory subunit 12 homolog A (442 aa).

A coiled-coil region spans residues Lys-6–Ala-137. One can recognise a PCI domain in the interval Glu-232–Asp-403.

Belongs to the proteasome subunit p55 family. In terms of assembly, component of the 19S regulatory particle (RP/PA700) lid subcomplex of the 26S proteasome. The 26S proteasome is composed of a core protease (CP), known as the 20S proteasome, capped at one or both ends by the 19S regulatory particle (RP/PA700). The RP/PA700 complex is composed of at least 17 different subunits in two subcomplexes, the base and the lid, which form the portions proximal and distal to the 20S proteolytic core, respectively. Ubiquitous with highest expression in flowers.

It is found in the cytoplasm. The protein resides in the nucleus. Its function is as follows. Acts as a regulatory subunit of the 26 proteasome which is involved in the ATP-dependent degradation of ubiquitinated proteins. Required for gametogenesis and sporophyte development. Acts redundantly with RPN5B. The sequence is that of 26S proteasome non-ATPase regulatory subunit 12 homolog A (RPN5A) from Arabidopsis thaliana (Mouse-ear cress).